We begin with the raw amino-acid sequence, 207 residues long: U1 small nuclear ribonucleoprotein C (207 aa).

The Matrin-type zinc-finger motif lies at 4 to 36; the sequence is YYCDYCDTYLTHDSPSVRKQHNAGYKHKANVRI. Composition is skewed to pro residues over residues 105–115 and 122–131; these read PPQGYMPPPGV and PGAPLPPPPQ. A disordered region spans residues 105–207; that stretch reads PPQGYMPPPG…PSAESPESNE (103 aa). Over residues 132–144 the composition is skewed to low complexity; sequence NGILRPPGMAPIP. Residues 162 to 183 are compositionally biased toward pro residues; that stretch reads GPPPNYNGLPPPPPYHTNPAAP. Residues 184–207 show a composition bias toward low complexity; that stretch reads PSGNFNNPNLNNPNPSAESPESNE.

This sequence belongs to the U1 small nuclear ribonucleoprotein C family. U1 snRNP is composed of the 7 core Sm proteins B/B', D1, D2, D3, E, F and G that assemble in a heptameric protein ring on the Sm site of the small nuclear RNA to form the core snRNP, and at least 3 U1 snRNP-specific proteins U1-70K, U1-A and U1-C. U1-C interacts with U1 snRNA and the 5' splice-site region of the pre-mRNA.

It localises to the nucleus. Functionally, component of the spliceosomal U1 snRNP, which is essential for recognition of the pre-mRNA 5' splice-site and the subsequent assembly of the spliceosome. U1-C is directly involved in initial 5' splice-site recognition for both constitutive and regulated alternative splicing. The interaction with the 5' splice-site seems to precede base-pairing between the pre-mRNA and the U1 snRNA. Stimulates commitment or early (E) complex formation by stabilizing the base pairing of the 5' end of the U1 snRNA and the 5' splice-site region. The protein is U1 small nuclear ribonucleoprotein C of Arabidopsis thaliana (Mouse-ear cress).